Consider the following 251-residue polypeptide: 1-(5-phosphoribosyl)-5-[(5-phosphoribosylamino)methylideneamino] imidazole-4-carboxamide isomerase (251 aa).

D8 functions as the Proton acceptor in the catalytic mechanism. D131 serves as the catalytic Proton donor.

This sequence belongs to the HisA/HisF family.

The protein resides in the cytoplasm. It catalyses the reaction 1-(5-phospho-beta-D-ribosyl)-5-[(5-phospho-beta-D-ribosylamino)methylideneamino]imidazole-4-carboxamide = 5-[(5-phospho-1-deoxy-D-ribulos-1-ylimino)methylamino]-1-(5-phospho-beta-D-ribosyl)imidazole-4-carboxamide. Its pathway is amino-acid biosynthesis; L-histidine biosynthesis; L-histidine from 5-phospho-alpha-D-ribose 1-diphosphate: step 4/9. This Burkholderia lata (strain ATCC 17760 / DSM 23089 / LMG 22485 / NCIMB 9086 / R18194 / 383) protein is 1-(5-phosphoribosyl)-5-[(5-phosphoribosylamino)methylideneamino] imidazole-4-carboxamide isomerase.